A 502-amino-acid chain; its full sequence is UDP-N-acetylmuramate--L-alanine ligase (502 aa).

119–125 (GSHGKST) is a binding site for ATP.

Belongs to the MurCDEF family.

It localises to the cytoplasm. It catalyses the reaction UDP-N-acetyl-alpha-D-muramate + L-alanine + ATP = UDP-N-acetyl-alpha-D-muramoyl-L-alanine + ADP + phosphate + H(+). It functions in the pathway cell wall biogenesis; peptidoglycan biosynthesis. In terms of biological role, cell wall formation. The sequence is that of UDP-N-acetylmuramate--L-alanine ligase from Frankia casuarinae (strain DSM 45818 / CECT 9043 / HFP020203 / CcI3).